The following is a 294-amino-acid chain: tRNA dimethylallyltransferase (294 aa).

10–17 (GITASGKS) is a binding site for ATP. 12–17 (TASGKS) contributes to the substrate binding site. The interaction with substrate tRNA stretch occupies residues 36 to 39 (DSKQ).

Belongs to the IPP transferase family. In terms of assembly, monomer. It depends on Mg(2+) as a cofactor.

The catalysed reaction is adenosine(37) in tRNA + dimethylallyl diphosphate = N(6)-dimethylallyladenosine(37) in tRNA + diphosphate. Its function is as follows. Catalyzes the transfer of a dimethylallyl group onto the adenine at position 37 in tRNAs that read codons beginning with uridine, leading to the formation of N6-(dimethylallyl)adenosine (i(6)A). This Wolbachia sp. subsp. Drosophila simulans (strain wRi) protein is tRNA dimethylallyltransferase.